The chain runs to 503 residues: Splicing factor 3A subunit 3 (503 aa).

Disordered stretches follow at residues 296–317 (PALM…EHER) and 341–384 (ATKE…NPKN). Positions 358–377 (DDSDVEASESDNEDDPDADD) are enriched in acidic residues. Phosphoserine occurs at positions 360, 365, and 367. Residues 408–439 (YNCEICGNFTYKGPKAFQRHFAEWRHAHGMRC) form a Matrin-type zinc finger.

This sequence belongs to the SF3A3 family. Probable component of a the U2 small nuclear ribonucleoproteins complex (U2 snRNP). As to expression, ubiquitous. In ovaries and testes, it is expressed in all germ and somatic cells. Highly expressed in spermatogonias and spermatocytes. Highly expressed in the germ cells of larval testes, while it is weakly expressed in fat body cells, in polyploid nuclei of salivary glands, and in larval brain.

The protein localises to the nucleus. Probable subunit of a splicing factor complex required for 'A' complex assembly formed by the stable binding of U2 snRNP to the branchpoint sequence (BPS) in pre-mRNA. Involved in male fertility. In Drosophila melanogaster (Fruit fly), this protein is Splicing factor 3A subunit 3 (noi).